The primary structure comprises 431 residues: Glutamate-1-semialdehyde 2,1-aminomutase 2 (431 aa).

N6-(pyridoxal phosphate)lysine is present on K268.

Belongs to the class-III pyridoxal-phosphate-dependent aminotransferase family. HemL subfamily. As to quaternary structure, homodimer. Requires pyridoxal 5'-phosphate as cofactor.

It is found in the cytoplasm. The enzyme catalyses (S)-4-amino-5-oxopentanoate = 5-aminolevulinate. The protein operates within porphyrin-containing compound metabolism; protoporphyrin-IX biosynthesis; 5-aminolevulinate from L-glutamyl-tRNA(Glu): step 2/2. In Anoxybacillus flavithermus (strain DSM 21510 / WK1), this protein is Glutamate-1-semialdehyde 2,1-aminomutase 2.